Reading from the N-terminus, the 54-residue chain is Light-harvesting protein B-870 beta chain (54 aa).

At 1 to 20 (EVKQESLSGITEGEAKEFHK) the chain is on the cytoplasmic side. The a bacteriochlorophyll site is built by His-19 and His-37. Residues 21–43 (IFTSSILVFFGVAAFAHLLVWIW) form a helical membrane-spanning segment. The Periplasmic portion of the chain corresponds to 44 to 54 (RPWVPGPNGYS).

Belongs to the antenna complex beta subunit family. In terms of assembly, the core complex is formed by different alpha and beta chains, binding bacteriochlorophyll molecules, and arranged most probably in tetrameric structures disposed around the reaction center. The non-pigmented gamma chains may constitute additional components.

Its subcellular location is the cell inner membrane. Functionally, antenna complexes are light-harvesting systems, which transfer the excitation energy to the reaction centers. The polypeptide is Light-harvesting protein B-870 beta chain (Rhodospirillum rubrum).